We begin with the raw amino-acid sequence, 145 residues long: Basic phospholipase A2 BFPA (145 aa).

Residues 1–27 (MNPAHLLVLLAVCVSLLGAANIPPQSL) form the signal peptide. 7 disulfides stabilise this stretch: cysteine 38–cysteine 97, cysteine 52–cysteine 144, cysteine 54–cysteine 70, cysteine 69–cysteine 125, cysteine 76–cysteine 118, cysteine 86–cysteine 111, and cysteine 104–cysteine 116. Ca(2+) is bound by residues tyrosine 53, glycine 55, and glycine 57. The active site involves histidine 73. Aspartate 74 provides a ligand contact to Ca(2+). Aspartate 119 is a catalytic residue.

It belongs to the phospholipase A2 family. Group I subfamily. D49 sub-subfamily. As to quaternary structure, homodimer; disulfide-linked. Ca(2+) is required as a cofactor. Expressed by the venom gland.

The protein localises to the secreted. It carries out the reaction a 1,2-diacyl-sn-glycero-3-phosphocholine + H2O = a 1-acyl-sn-glycero-3-phosphocholine + a fatty acid + H(+). Its function is as follows. Snake venom phospholipase A2 (PLA2) that inhibits blood coagulation and shows bactericidal activities against both Gram-negative and -positive bacteria (E.coli, MIC=0.4 uM and S.aureus, MIC=0.1 uM). PLA2 catalyzes the calcium-dependent hydrolysis of the 2-acyl groups in 3-sn-phosphoglycerides. The protein is Basic phospholipase A2 BFPA of Bungarus fasciatus (Banded krait).